We begin with the raw amino-acid sequence, 359 residues long: Peptide chain release factor 1 (359 aa).

Glutamine 236 bears the N5-methylglutamine mark.

Belongs to the prokaryotic/mitochondrial release factor family. Post-translationally, methylated by PrmC. Methylation increases the termination efficiency of RF1.

It localises to the cytoplasm. Peptide chain release factor 1 directs the termination of translation in response to the peptide chain termination codons UAG and UAA. The sequence is that of Peptide chain release factor 1 from Streptococcus pneumoniae serotype 2 (strain D39 / NCTC 7466).